The sequence spans 855 residues: DNA mismatch repair protein MutS (855 aa).

616–623 (GPNMGGKS) serves as a coordination point for ATP.

Belongs to the DNA mismatch repair MutS family.

In terms of biological role, this protein is involved in the repair of mismatches in DNA. It is possible that it carries out the mismatch recognition step. This protein has a weak ATPase activity. The sequence is that of DNA mismatch repair protein MutS from Salmonella dublin (strain CT_02021853).